The sequence spans 338 residues: Anthocyanidin reductase ((2S)-flavan-3-ol-forming) (338 aa).

Residues 18-21 (TGFV), K48, 87-90 (VATP), and Y168 contribute to the NADP(+) site.

Belongs to the NAD(P)-dependent epimerase/dehydratase family. Dihydroflavonol-4-reductase subfamily. In terms of tissue distribution, expressed in leaves and grape berries.

It carries out the reaction a (2S,3R)-flavan-3-ol + 2 NADP(+) = an anthocyanidin with a 3-hydroxy group + 2 NADPH + 2 H(+). The catalysed reaction is a (2S,3S)-flavan-3-ol + 2 NADP(+) = an anthocyanidin with a 3-hydroxy group + 2 NADPH + 2 H(+). Its pathway is secondary metabolite biosynthesis; flavonoid biosynthesis. Functionally, produces the terminal flavan-3-ol monomers required for the formation of proanthocyanidins or condensed tannins in leaves and flowers, as well as in the skin and seeds of developing berries. Behaves as a reductase and as a C-3 epimerase. Catalyzes the double reduction of anthocyanidins, producing a mixture of (2S,3S)- and (2S,3R)-flavan-3-ols. The enzyme catalyzes sequential hydride transfers to C-2 and C-4, respectively and epimerization at C-3 is achieved by tautomerization that occurs between the two hydride transfers. Converts cyanidin, pelargonidin and delphinidin into catechin and epicatechin, afzelechin and epiafzelechin, and gallocatechin and epigallocatechin respectively. This Vitis vinifera (Grape) protein is Anthocyanidin reductase ((2S)-flavan-3-ol-forming).